The following is a 475-amino-acid chain: MSQKNVGKIVQILGPVVDISFAGQKIPAIYNNLELVFENNKYNFEVAQHIGDEVVRTISMVSTNGLSRGLEVIDTGAPIMVPVGKEVLSRMFNVLGQTIDNKGEIEAKEFRSIHASAPSYEEQNDSSEILETGIKVIDLLVPYSKGGKIGLFGGAGVGKTVLVQELINNIATQHGGLSVFAGVGERTREGNDLYHEMIASGVLDKTTLVFGQMNEPPGARMRVALTGLTMAEYFRDKFKQDVLLFIDNIFRFTQAGSEVSALLGRMPSAVGYQPTLATEMGQLQERITSTKNGSITSVQAVYVPADDLTDPAPATTFTHLDAKTVLERNIAALGIYPAIDPLASSSRMLDPLIIGNEHYLVALEVQNILQRFKELQDIIAILGIGELSEEDKKLVFRARKIRNFLSQPFTVAEKFSGKKGKFVPLKETIRSFKEILEGKHDNLPEDAFLYVGSIDEAIEKAKGQSNATTANNNNA.

Position 153–160 (153–160 (GGAGVGKT)) interacts with ATP.

The protein belongs to the ATPase alpha/beta chains family. F-type ATPases have 2 components, CF(1) - the catalytic core - and CF(0) - the membrane proton channel. CF(1) has five subunits: alpha(3), beta(3), gamma(1), delta(1), epsilon(1). CF(0) has three main subunits: a(1), b(2) and c(9-12). The alpha and beta chains form an alternating ring which encloses part of the gamma chain. CF(1) is attached to CF(0) by a central stalk formed by the gamma and epsilon chains, while a peripheral stalk is formed by the delta and b chains.

The protein localises to the cell membrane. The catalysed reaction is ATP + H2O + 4 H(+)(in) = ADP + phosphate + 5 H(+)(out). Its function is as follows. Produces ATP from ADP in the presence of a proton gradient across the membrane. The catalytic sites are hosted primarily by the beta subunits. This Mycoplasmopsis pulmonis (strain UAB CTIP) (Mycoplasma pulmonis) protein is ATP synthase subunit beta 1.